Consider the following 161-residue polypeptide: RNA pyrophosphohydrolase (161 aa).

One can recognise a Nudix hydrolase domain in the interval 12 to 154 (PYRPGVGMMI…KRKLYQAVVK (143 aa)). The Nudix box motif lies at 46–67 (GGIVPGETPSIAAMREMLEEIG).

The protein belongs to the Nudix hydrolase family. RppH subfamily. A divalent metal cation serves as cofactor.

Functionally, accelerates the degradation of transcripts by removing pyrophosphate from the 5'-end of triphosphorylated RNA, leading to a more labile monophosphorylated state that can stimulate subsequent ribonuclease cleavage. This chain is RNA pyrophosphohydrolase, found in Rickettsia bellii (strain OSU 85-389).